The sequence spans 100 residues: Flagellar transcriptional regulator FlhD (100 aa).

This sequence belongs to the FlhD family. In terms of assembly, homodimer; disulfide-linked. Forms a heterohexamer composed of two FlhC and four FlhD subunits. Each FlhC binds a FlhD dimer, forming a heterotrimer, and a hexamer assembles by dimerization of two heterotrimers.

The protein localises to the cytoplasm. Its function is as follows. Functions in complex with FlhC as a master transcriptional regulator that regulates transcription of several flagellar and non-flagellar operons by binding to their promoter region. Activates expression of class 2 flagellar genes, including fliA, which is a flagellum-specific sigma factor that turns on the class 3 genes. Also regulates genes whose products function in a variety of physiological pathways. The protein is Flagellar transcriptional regulator FlhD of Ralstonia pickettii (strain 12D).